A 274-amino-acid polypeptide reads, in one-letter code: Probable lipoprotein peptidase YaeF (274 aa).

Residues M1–A20 form the signal peptide. Residue C21 is the site of N-palmitoyl cysteine attachment. Residue C21 is the site of S-diacylglycerol cysteine attachment. C207 functions as the Nucleophile in the catalytic mechanism. The Proton acceptor role is filled by H257.

Its subcellular location is the cell inner membrane. This chain is Probable lipoprotein peptidase YaeF (yaeF), found in Escherichia coli (strain K12).